Consider the following 439-residue polypeptide: Probable eukaryotic translation initiation factor 5-1 (439 aa).

29-36 lines the GTP pocket; sequence GRGNGIKT. Residues 143–245 form a disordered region; sequence LKNPPEQKKS…REAAEKRMKE (103 aa). The segment covering 147–186 has biased composition (basic and acidic residues); it reads PEQKKSSKDKKSMRRAEKERLREGEAADEEMRKLKKEAAS. A compositionally biased stretch (acidic residues) spans 214 to 228; that stretch reads DENDQADSEEDDDDV. At Thr232 the chain carries Phosphothreonine. Positions 234-245 are enriched in basic and acidic residues; sequence TSREAAEKRMKE. The W2 domain occupies 283–439; that stretch reads KIPENAHEKL…QNAESESEEE (157 aa). Residues Ser434 and Ser436 each carry the phosphoserine modification.

The protein belongs to the eIF-2-beta/eIF-5 family.

Functionally, catalyzes the hydrolysis of GTP bound to the 40S ribosomal initiation complex (40S.mRNA.Met-tRNA[F].eIF-2.GTP) with the subsequent joining of a 60S ribosomal subunit resulting in the release of eIF-2 and the guanine nucleotide. The subsequent joining of a 60S ribosomal subunit results in the formation of a functional 80S initiation complex (80S.mRNA.Met-tRNA[F]). The sequence is that of Probable eukaryotic translation initiation factor 5-1 from Arabidopsis thaliana (Mouse-ear cress).